A 256-amino-acid polypeptide reads, in one-letter code: Thiazole synthase (256 aa).

The active-site Schiff-base intermediate with DXP is the lysine 95. 1-deoxy-D-xylulose 5-phosphate contacts are provided by residues glycine 156, 182–183 (AG), and 204–205 (NT).

Belongs to the ThiG family. Homotetramer. Forms heterodimers with either ThiH or ThiS.

The protein resides in the cytoplasm. The enzyme catalyses [ThiS sulfur-carrier protein]-C-terminal-Gly-aminoethanethioate + 2-iminoacetate + 1-deoxy-D-xylulose 5-phosphate = [ThiS sulfur-carrier protein]-C-terminal Gly-Gly + 2-[(2R,5Z)-2-carboxy-4-methylthiazol-5(2H)-ylidene]ethyl phosphate + 2 H2O + H(+). It functions in the pathway cofactor biosynthesis; thiamine diphosphate biosynthesis. Catalyzes the rearrangement of 1-deoxy-D-xylulose 5-phosphate (DXP) to produce the thiazole phosphate moiety of thiamine. Sulfur is provided by the thiocarboxylate moiety of the carrier protein ThiS. In vitro, sulfur can be provided by H(2)S. The sequence is that of Thiazole synthase from Shigella flexneri.